Here is a 239-residue protein sequence, read N- to C-terminus: Tubulin beta-3 chain (239 aa).

Asn-22 provides a ligand contact to GTP. Residues 207 to 239 (EESNMNDLVSEYQQYQDASAEPXXEQEEDYEEA) form a disordered region. The segment covering 230–239 (XEQEEDYEEA) has biased composition (acidic residues).

Belongs to the tubulin family. In terms of assembly, dimer of alpha and beta chains. A typical microtubule is a hollow water-filled tube with an outer diameter of 25 nm and an inner diameter of 15 nM. Alpha-beta heterodimers associate head-to-tail to form protofilaments running lengthwise along the microtubule wall with the beta-tubulin subunit facing the microtubule plus end conferring a structural polarity. Microtubules usually have 13 protofilaments but different protofilament numbers can be found in some organisms and specialized cells. The cofactor is Mg(2+).

The protein resides in the cytoplasm. The protein localises to the cytoskeleton. Functionally, tubulin is the major constituent of microtubules, a cylinder consisting of laterally associated linear protofilaments composed of alpha- and beta-tubulin heterodimers. Microtubules grow by the addition of GTP-tubulin dimers to the microtubule end, where a stabilizing cap forms. Below the cap, tubulin dimers are in GDP-bound state, owing to GTPase activity of alpha-tubulin. The chain is Tubulin beta-3 chain (TUBB3) from Anemia phyllitidis (Fern).